A 130-amino-acid chain; its full sequence is MRHRKSGRQLNRNSSHRQAMFRNMACSIVRHEVIKTTVAKAKELRRVVEPLITLAKSDSVANRRLAFARTRDAEVVGKLFTELGPRFQERPGGYTRILKCGLRTGDKAPMAYIELVGRPEAAEAVEDTAE.

This sequence belongs to the bacterial ribosomal protein bL17 family. In terms of assembly, part of the 50S ribosomal subunit. Contacts protein L32.

The sequence is that of Large ribosomal subunit protein bL17 from Shewanella pealeana (strain ATCC 700345 / ANG-SQ1).